Here is a 145-residue protein sequence, read N- to C-terminus: AN1-type zinc finger protein 2A (145 aa).

AN1-type zinc fingers lie at residues 4 to 52 (PDLG…QKDV) and 94 to 142 (KIFT…RPTI). Positions 10, 15, 25, 28, 33, 36, 42, 44, 100, 105, 115, 118, 123, 126, 132, and 134 each coordinate Zn(2+).

It is found in the cytoplasm. The protein localises to the nucleus. The sequence is that of AN1-type zinc finger protein 2A (ZFAND2A) from Homo sapiens (Human).